The sequence spans 338 residues: tRNA N6-adenosine threonylcarbamoyltransferase (338 aa).

Residues His-114 and His-118 each contribute to the Fe cation site. Substrate-binding positions include Leu-136–Gly-140, Asp-169, Gly-182, Asp-186, and Asn-275. Asp-301 contributes to the Fe cation binding site.

Belongs to the KAE1 / TsaD family. Fe(2+) serves as cofactor.

It is found in the cytoplasm. The catalysed reaction is L-threonylcarbamoyladenylate + adenosine(37) in tRNA = N(6)-L-threonylcarbamoyladenosine(37) in tRNA + AMP + H(+). Its function is as follows. Required for the formation of a threonylcarbamoyl group on adenosine at position 37 (t(6)A37) in tRNAs that read codons beginning with adenine. Is involved in the transfer of the threonylcarbamoyl moiety of threonylcarbamoyl-AMP (TC-AMP) to the N6 group of A37, together with TsaE and TsaB. TsaD likely plays a direct catalytic role in this reaction. The chain is tRNA N6-adenosine threonylcarbamoyltransferase from Streptococcus equi subsp. equi (strain 4047).